Consider the following 57-residue polypeptide: uncharacterized protein (57 aa).

This is an uncharacterized protein from Escherichia coli.